The primary structure comprises 513 residues: ATP synthase subunit alpha (513 aa).

169 to 176 (GDRQTGKT) is an ATP binding site.

It belongs to the ATPase alpha/beta chains family. In terms of assembly, F-type ATPases have 2 components, CF(1) - the catalytic core - and CF(0) - the membrane proton channel. CF(1) has five subunits: alpha(3), beta(3), gamma(1), delta(1), epsilon(1). CF(0) has three main subunits: a(1), b(2) and c(9-12). The alpha and beta chains form an alternating ring which encloses part of the gamma chain. CF(1) is attached to CF(0) by a central stalk formed by the gamma and epsilon chains, while a peripheral stalk is formed by the delta and b chains.

It is found in the cell inner membrane. The catalysed reaction is ATP + H2O + 4 H(+)(in) = ADP + phosphate + 5 H(+)(out). Produces ATP from ADP in the presence of a proton gradient across the membrane. The alpha chain is a regulatory subunit. In Idiomarina loihiensis (strain ATCC BAA-735 / DSM 15497 / L2-TR), this protein is ATP synthase subunit alpha.